Consider the following 137-residue polypeptide: Small ribosomal subunit protein uS9 (137 aa).

Belongs to the universal ribosomal protein uS9 family.

This chain is Small ribosomal subunit protein uS9 (rps9), found in Saccharolobus solfataricus (strain ATCC 35092 / DSM 1617 / JCM 11322 / P2) (Sulfolobus solfataricus).